A 419-amino-acid chain; its full sequence is Putative zinc metalloprotease SPy_1963/M5005_Spy1674 (419 aa).

Zn(2+) is bound at residue His18. Residue Glu19 is part of the active site. His22 serves as a coordination point for Zn(2+). 4 consecutive transmembrane segments (helical) span residues 169 to 191 (LITN…ILLV), 301 to 323 (LAWS…FSLN), 343 to 365 (LESV…LIPI), and 392 to 411 (AYIT…AVTW). The 100-residue stretch at 175–274 (GPMNNFILGI…LKTVAVKPQK (100 aa)) folds into the PDZ domain.

This sequence belongs to the peptidase M50B family. The cofactor is Zn(2+).

The protein resides in the cell membrane. This Streptococcus pyogenes serotype M1 protein is Putative zinc metalloprotease SPy_1963/M5005_Spy1674.